Consider the following 267-residue polypeptide: Diphthine synthase (267 aa).

S-adenosyl-L-methionine-binding positions include Leu9, Asp87, Ile90, 115-116, Leu166, Leu205, and His230; that span reads SI.

It belongs to the diphthine synthase family. Homodimer.

It catalyses the reaction 2-[(3S)-amino-3-carboxypropyl]-L-histidyl-[translation elongation factor 2] + 3 S-adenosyl-L-methionine = diphthine-[translation elongation factor 2] + 3 S-adenosyl-L-homocysteine + 3 H(+). Its pathway is protein modification; peptidyl-diphthamide biosynthesis. Functionally, S-adenosyl-L-methionine-dependent methyltransferase that catalyzes the trimethylation of the amino group of the modified target histidine residue in translation elongation factor 2 (EF-2), to form an intermediate called diphthine. The three successive methylation reactions represent the second step of diphthamide biosynthesis. In Staphylothermus marinus (strain ATCC 43588 / DSM 3639 / JCM 9404 / F1), this protein is Diphthine synthase.